The primary structure comprises 346 residues: [LysW]-lysine/[LysW]-ornithine hydrolase (346 aa).

Residue His-68 participates in Zn(2+) binding. Asp-70 is a catalytic residue. Asp-92 lines the Zn(2+) pocket. Residue Glu-122 is the Proton acceptor of the active site. Residues Glu-123, Glu-146, and His-317 each coordinate Zn(2+).

This sequence belongs to the peptidase M20A family. LysK subfamily. The cofactor is Zn(2+). It depends on Co(2+) as a cofactor.

The protein resides in the cytoplasm. It carries out the reaction [amino-group carrier protein]-C-terminal-gamma-(L-lysyl)-L-glutamate + H2O = [amino-group carrier protein]-C-terminal-L-glutamate + L-lysine. It catalyses the reaction [amino-group carrier protein]-C-terminal-gamma-(L-ornithyl)-L-glutamate + H2O = [amino-group carrier protein]-C-terminal-L-glutamate + L-ornithine. It participates in amino-acid biosynthesis; L-lysine biosynthesis via AAA pathway; L-lysine from L-alpha-aminoadipate (Thermus route): step 5/5. The protein operates within amino-acid biosynthesis; L-arginine biosynthesis. Functionally, catalyzes the release of L-lysine from [LysW]-gamma-L-lysine and the release of L-ornithine from [LysW]-L-ornithine. This Saccharolobus solfataricus (strain ATCC 35092 / DSM 1617 / JCM 11322 / P2) (Sulfolobus solfataricus) protein is [LysW]-lysine/[LysW]-ornithine hydrolase.